We begin with the raw amino-acid sequence, 622 residues long: Membrane protein insertase YidC (622 aa).

Residues Ile-6–Glu-26 form a helical membrane-spanning segment. A disordered region spans residues Thr-47–Arg-87. The segment covering Leu-62–Ser-83 has biased composition (polar residues). 3 helical membrane-spanning segments follow: residues Trp-381–Ala-401, Phe-451–Val-471, and Pro-525–Val-545. The disordered stretch occupies residues Thr-563–Lys-622. Residues Val-583 to Ala-596 show a composition bias toward polar residues. A compositionally biased stretch (basic residues) spans Arg-613–Lys-622.

Belongs to the OXA1/ALB3/YidC family. Type 1 subfamily. As to quaternary structure, interacts with the Sec translocase complex via SecD. Specifically interacts with transmembrane segments of nascent integral membrane proteins during membrane integration.

The protein resides in the cell inner membrane. Functionally, required for the insertion and/or proper folding and/or complex formation of integral membrane proteins into the membrane. Involved in integration of membrane proteins that insert both dependently and independently of the Sec translocase complex, as well as at least some lipoproteins. Aids folding of multispanning membrane proteins. In Nitrosomonas eutropha (strain DSM 101675 / C91 / Nm57), this protein is Membrane protein insertase YidC.